The sequence spans 201 residues: Cobalt-precorrin-7 C(5)-methyltransferase (201 aa).

The protein belongs to the precorrin methyltransferase family.

It catalyses the reaction Co-precorrin-7 + S-adenosyl-L-methionine = Co-precorrin-8X + S-adenosyl-L-homocysteine + H(+). It participates in cofactor biosynthesis; adenosylcobalamin biosynthesis; cob(II)yrinate a,c-diamide from sirohydrochlorin (anaerobic route): step 8/10. Catalyzes the methylation of C-5 in cobalt-precorrin-7 to form cobalt-precorrin-8. The sequence is that of Cobalt-precorrin-7 C(5)-methyltransferase (cbiE) from Salmonella typhi.